Here is a 325-residue protein sequence, read N- to C-terminus: Diacylglycerol acyltransferase/mycolyltransferase Ag85B (325 aa).

The first 40 residues, 1–40 (MTDVSGKIRAWGRRLLVGAAAAAALPGLVGLAGGAATAGA), serve as a signal peptide directing secretion. 82-83 (LR) serves as a coordination point for substrate. The interval 98–108 (FEWYYQSGLSV) is fibronectin-binding. Cys127 and Cys132 are joined by a disulfide. Positions 166 and 194 each coordinate substrate. Ser166 acts as the Nucleophile in catalysis. Glu270 is an active-site residue. Residues 272-275 (FVRS), Lys279, and 302-304 (HSW) each bind substrate. His302 is an active-site residue.

The protein belongs to the mycobacterial A85 antigen family.

It is found in the secreted. It catalyses the reaction 2 alpha,alpha'-trehalose 6-mycolate = alpha,alpha'-trehalose 6,6'-bismycolate + alpha,alpha-trehalose. The enzyme catalyses an acyl-CoA + a 1,2-diacyl-sn-glycerol = a triacyl-sn-glycerol + CoA. In terms of biological role, the antigen 85 proteins (FbpA, FbpB, FbpC) are responsible for the high affinity of mycobacteria for fibronectin, a large adhesive glycoprotein, which facilitates the attachment of M.tuberculosis to murine alveolar macrophages (AMs). They also help to maintain the integrity of the cell wall by catalyzing the transfer of mycolic acids to cell wall arabinogalactan and through the synthesis of alpha,alpha-trehalose dimycolate (TDM, cord factor). They catalyze the transfer of a mycoloyl residue from one molecule of alpha,alpha-trehalose monomycolate (TMM) to another TMM, leading to the formation of TDM. This Mycobacterium kansasii protein is Diacylglycerol acyltransferase/mycolyltransferase Ag85B (fbpB).